The primary structure comprises 1117 residues: RNA-directed RNA polymerase (1117 aa).

Positions 1 to 17 (MTVSGRSSWQNGKTTNA) are enriched in polar residues. The interval 1 to 23 (MTVSGRSSWQNGKTTNAMRAGKL) is disordered.

It carries out the reaction RNA(n) + a ribonucleoside 5'-triphosphate = RNA(n+1) + diphosphate. In terms of biological role, RNA-dependent RNA polymerase which replicates the viral genome. In Penicillium chrysogenum (Penicillium notatum), this protein is RNA-directed RNA polymerase (p1).